A 122-amino-acid polypeptide reads, in one-letter code: Large ribosomal subunit protein uL14c (122 aa).

This sequence belongs to the universal ribosomal protein uL14 family. In terms of assembly, part of the 50S ribosomal subunit.

Its subcellular location is the plastid. The protein resides in the chloroplast. In terms of biological role, binds to 23S rRNA. This is Large ribosomal subunit protein uL14c from Nicotiana sylvestris (Wood tobacco).